The following is a 245-amino-acid chain: MIIPALDLIDGTVVRLHQGDYGKQRDYGNDPLPRLQDYAAQGAEVLHLVDLTGAKDPAKRQIPLIKTLVAGVNVPVQVGGGVRSEEDVAALLEAGVARVVVGSTAVKSPKMVKGWFERFGADALVLALDVRIDEQGNKQVAVSGWQENSGVSLEQLVETYLPVGLKHVLCTDISRDGTLAGSNVSLYEEVCARYPQVAFQSSGGIGDINDVAALRGTGVRGVIVGRALLEGKFTVKEAIACWQNA.

Asp-7 acts as the Proton acceptor in catalysis. Asp-129 serves as the catalytic Proton donor.

The protein belongs to the HisA/HisF family.

The protein resides in the cytoplasm. It carries out the reaction 1-(5-phospho-beta-D-ribosyl)-5-[(5-phospho-beta-D-ribosylamino)methylideneamino]imidazole-4-carboxamide = 5-[(5-phospho-1-deoxy-D-ribulos-1-ylimino)methylamino]-1-(5-phospho-beta-D-ribosyl)imidazole-4-carboxamide. It functions in the pathway amino-acid biosynthesis; L-histidine biosynthesis; L-histidine from 5-phospho-alpha-D-ribose 1-diphosphate: step 4/9. This chain is 1-(5-phosphoribosyl)-5-[(5-phosphoribosylamino)methylideneamino] imidazole-4-carboxamide isomerase, found in Shigella boydii serotype 18 (strain CDC 3083-94 / BS512).